A 116-amino-acid polypeptide reads, in one-letter code: U16-barytoxin-Tl1f (116 aa).

The first 20 residues, 1–20 (MKTIIVFLSLLVLATKFGDA), serve as a signal peptide directing secretion. Positions 21 to 74 (NEGVNQEQMKEVIQNEFREDFLNEMAAMSLLQQLEAIESTLLEKEADRNSRQKR) are excised as a propeptide. 3 cysteine pairs are disulfide-bonded: Cys-75–Cys-90, Cys-82–Cys-95, and Cys-89–Cys-110. An N-linked (GlcNAc...) asparagine glycan is attached at Asn-85.

Belongs to the neurotoxin 14 (magi-1) family. 06 (ICK-Trit) subfamily. In terms of tissue distribution, expressed by the venom gland.

The protein localises to the secreted. Functionally, ion channel inhibitor. This Trittame loki (Brush-footed trapdoor spider) protein is U16-barytoxin-Tl1f.